A 332-amino-acid polypeptide reads, in one-letter code: RNA polymerase sigma-B factor (332 aa).

The short motif at 125 to 138 is the Polymerase core binding element; that stretch reads DLIQEGALGLERGV. Residues 294–313 constitute a DNA-binding region (H-T-H motif); sequence LVQISQRMGISRERVRQVEK.

The protein belongs to the sigma-70 factor family.

In terms of biological role, sigma factors are initiation factors that promote the attachment of RNA polymerase to specific initiation sites and are then released. This chain is RNA polymerase sigma-B factor (sigB), found in Nostoc sp. (strain PCC 7120 / SAG 25.82 / UTEX 2576).